The primary structure comprises 466 residues: Prophage integrase IntF (466 aa).

A Core-binding (CB) domain is found at 134–239; sequence KTKVTFSVAW…LLRAFIKWSN (106 aa). The 178-residue stretch at 268-445 folds into the Tyr recombinase domain; the sequence is KADDCLQKEQ…PLDLLRKWHE (178 aa). Catalysis depends on residues Arg306, Lys328, His396, Arg399, and His422. The active-site O-(3'-phospho-DNA)-tyrosine intermediate is the Tyr432.

It belongs to the 'phage' integrase family.

Functionally, integrase is necessary for integration of the phage into the host genome by site-specific recombination. In conjunction with excisionase, integrase is also necessary for excision of the prophage from the host genome. The polypeptide is Prophage integrase IntF (intF) (Escherichia coli (strain K12)).